Reading from the N-terminus, the 66-residue chain is Large ribosomal subunit protein bL32 (66 aa).

Belongs to the bacterial ribosomal protein bL32 family.

The chain is Large ribosomal subunit protein bL32 from Acetivibrio thermocellus (strain ATCC 27405 / DSM 1237 / JCM 9322 / NBRC 103400 / NCIMB 10682 / NRRL B-4536 / VPI 7372) (Clostridium thermocellum).